Here is a 338-residue protein sequence, read N- to C-terminus: Heat-inducible transcription repressor HrcA (338 aa).

It belongs to the HrcA family.

Functionally, negative regulator of class I heat shock genes (grpE-dnaK-dnaJ and groELS operons). Prevents heat-shock induction of these operons. This chain is Heat-inducible transcription repressor HrcA, found in Bacillus cereus (strain AH820).